A 1184-amino-acid polypeptide reads, in one-letter code: Nucleolar protein 6 (1184 aa).

Over residues Met-1–Lys-10 the composition is skewed to basic and acidic residues. Disordered regions lie at residues Met-1 to Pro-42 and Arg-1133 to Cys-1184.

Belongs to the NRAP family. Part of the small subunit (SSU) processome, composed of more than 70 proteins and the RNA chaperone small nucleolar RNA (snoRNA) U3.

It localises to the nucleus. Its subcellular location is the nucleolus. The protein localises to the chromosome. Part of the small subunit (SSU) processome, first precursor of the small eukaryotic ribosomal subunit. During the assembly of the SSU processome in the nucleolus, many ribosome biogenesis factors, an RNA chaperone and ribosomal proteins associate with the nascent pre-rRNA and work in concert to generate RNA folding, modifications, rearrangements and cleavage as well as targeted degradation of pre-ribosomal RNA by the RNA exosome. The chain is Nucleolar protein 6 from Drosophila virilis (Fruit fly).